The sequence spans 573 residues: MLKRFFLLLSSLLLVCNVQAGLFNNKPQYLTAAEAFIFSSSQQDGQLQLHWQIADGYYLYQKEIQLSAQNATLGDVTFPTAEKYQDEFFGEVAIFRDQLKLPVKLTDLKENPSLKIRYQGCTKGFCYPPETVVIPLNPSLQGNNSANSAALPSTIATPNAPQTELAENLSNNYLSIFGFLLLGIGLAFTPCVLPMLPLLSAIVIGHKNRPNTSRALLLSFTYVQGMALTYTLLGLTVAAIGLPFQVALQSPAVLISLAVLFTLLAASMFGLFEIRLPNTWQQKLNALSQQQQGGAVGNVFIMGIIAGLVASPCTSAPLSGALLYVAQSGNLLIGGLALYLLALGMGLPLILITVFGNQILPKSGEWLFKVKTAFGFVMLALPIFLISRILPSHYEPFLWSTLALAFLGWLISSLNYSTMLKQAVRILLFIAFGLTAYPWANLVWQTTSNTAQPTTPHLAMEKITSLTELEQKLTAYQGKKVMLDLYADWCVACKEFEKYTFTDPQVQQQLATMAVLQIDMTKNSAENTALMKHFNVLGLPTILFFDENGHEMTNVRITGFLTANQFLAWLNRL.

An N-terminal signal peptide occupies residues 1-20; it reads MLKRFFLLLSSLLLVCNVQA. Residues 21–175 lie on the Periplasmic side of the membrane; sequence GLFNNKPQYL…AENLSNNYLS (155 aa). Disulfide bonds link Cys-121–Cys-126 and Cys-191–Cys-313. The helical transmembrane segment at 176–196 threads the bilayer; that stretch reads IFGFLLLGIGLAFTPCVLPML. Residues 197–227 lie on the Cytoplasmic side of the membrane; that stretch reads PLLSAIVIGHKNRPNTSRALLLSFTYVQGMA. The chain crosses the membrane as a helical span at residues 228-248; the sequence is LTYTLLGLTVAAIGLPFQVAL. The Periplasmic segment spans residues 249–251; the sequence is QSP. Residues 252–272 form a helical membrane-spanning segment; sequence AVLISLAVLFTLLAASMFGLF. At 273 to 292 the chain is on the cytoplasmic side; it reads EIRLPNTWQQKLNALSQQQQ. Residues 293 to 313 traverse the membrane as a helical segment; the sequence is GGAVGNVFIMGIIAGLVASPC. The Periplasmic segment spans residues 314–331; it reads TSAPLSGALLYVAQSGNL. The helical transmembrane segment at 332–352 threads the bilayer; that stretch reads LIGGLALYLLALGMGLPLILI. Topologically, residues 353–365 are cytoplasmic; the sequence is TVFGNQILPKSGE. The helical transmembrane segment at 366–386 threads the bilayer; it reads WLFKVKTAFGFVMLALPIFLI. Residues 387 to 393 are Periplasmic-facing; sequence SRILPSH. Residues 394 to 414 traverse the membrane as a helical segment; sequence YEPFLWSTLALAFLGWLISSL. The Cytoplasmic portion of the chain corresponds to 415-425; sequence NYSTMLKQAVR. The chain crosses the membrane as a helical span at residues 426–446; the sequence is ILLFIAFGLTAYPWANLVWQT. In terms of domain architecture, Thioredoxin spans 440-573; sequence ANLVWQTTSN…NQFLAWLNRL (134 aa). The Periplasmic segment spans residues 447-573; that stretch reads TSNTAQPTTP…NQFLAWLNRL (127 aa). Cys-490 and Cys-493 are joined by a disulfide.

This sequence belongs to the thioredoxin family. DsbD subfamily.

It is found in the cell inner membrane. It carries out the reaction [protein]-dithiol + NAD(+) = [protein]-disulfide + NADH + H(+). It catalyses the reaction [protein]-dithiol + NADP(+) = [protein]-disulfide + NADPH + H(+). Required to facilitate the formation of correct disulfide bonds in some periplasmic proteins and for the assembly of the periplasmic c-type cytochromes. Acts by transferring electrons from cytoplasmic thioredoxin to the periplasm. This transfer involves a cascade of disulfide bond formation and reduction steps. The chain is Thiol:disulfide interchange protein DsbD from Haemophilus ducreyi (strain 35000HP / ATCC 700724).